The chain runs to 147 residues: Fibromodulin (147 aa).

6 LRR repeats span residues 1–15 (LDHN…PLPR), 16–37 (SLRE…ALEG), 40–61 (NLTA…MRGL), 63–84 (SLIL…LPSA), 85–105 (LEQL…YFRG), and 108–128 (KLLY…ASNT). Asparagine 5 is a glycosylation site (N-linked (GlcNAc...) asparagine). N-linked (GlcNAc...) asparagine glycosylation is present at asparagine 40. The N-linked (GlcNAc...) asparagine glycan is linked to asparagine 130. The LRR 7 repeat unit spans residues 133-147 (SLLELDLSYNQLQKI).

This sequence belongs to the small leucine-rich proteoglycan (SLRP) family. SLRP class II subfamily. Binds to type I and type II collagen. Post-translationally, binds keratan sulfate chains. In terms of processing, sulfated on tyrosine residues. The N-terminus is blocked by a pyrrolidone carboxylic acid generated by post-translational modification of N-terminal glutamine.

Its subcellular location is the secreted. The protein localises to the extracellular space. It is found in the extracellular matrix. Its function is as follows. Affects the rate of fibrils formation. May have a primary role in collagen fibrillogenesis. The chain is Fibromodulin (FMOD) from Oryctolagus cuniculus (Rabbit).